We begin with the raw amino-acid sequence, 347 residues long: Large ribosomal subunit protein uL10 (347 aa).

The disordered stretch occupies residues 312–347 (AAAPAEEEVKKEEEPEEEEEDHAEEDGMAGLGALFG). Acidic residues predominate over residues 325 to 338 (EPEEEEEDHAEEDG).

The protein belongs to the universal ribosomal protein uL10 family. As to quaternary structure, part of the 50S ribosomal subunit. Forms part of the ribosomal stalk which helps the ribosome interact with GTP-bound translation factors. Forms a heptameric L10(L12)2(L12)2(L12)2 complex, where L10 forms an elongated spine to which the L12 dimers bind in a sequential fashion.

Its function is as follows. Forms part of the ribosomal stalk, playing a central role in the interaction of the ribosome with GTP-bound translation factors. The protein is Large ribosomal subunit protein uL10 of Methanosarcina acetivorans (strain ATCC 35395 / DSM 2834 / JCM 12185 / C2A).